The following is a 964-amino-acid chain: Glycine dehydrogenase (decarboxylating) (964 aa).

Polar residues predominate over residues 1-10 (MNSTLQNRNR). Positions 1 to 25 (MNSTLQNRNRTNLERVSTDPLDTFP) are disordered. Lysine 713 carries the N6-(pyridoxal phosphate)lysine modification.

It belongs to the GcvP family. In terms of assembly, the glycine cleavage system is composed of four proteins: P, T, L and H. Requires pyridoxal 5'-phosphate as cofactor.

The catalysed reaction is N(6)-[(R)-lipoyl]-L-lysyl-[glycine-cleavage complex H protein] + glycine + H(+) = N(6)-[(R)-S(8)-aminomethyldihydrolipoyl]-L-lysyl-[glycine-cleavage complex H protein] + CO2. The glycine cleavage system catalyzes the degradation of glycine. The P protein binds the alpha-amino group of glycine through its pyridoxal phosphate cofactor; CO(2) is released and the remaining methylamine moiety is then transferred to the lipoamide cofactor of the H protein. The sequence is that of Glycine dehydrogenase (decarboxylating) from Leptospira borgpetersenii serovar Hardjo-bovis (strain JB197).